A 232-amino-acid polypeptide reads, in one-letter code: Putative N-acetylmannosamine-6-phosphate 2-epimerase (232 aa).

The protein belongs to the NanE family.

The enzyme catalyses an N-acyl-D-glucosamine 6-phosphate = an N-acyl-D-mannosamine 6-phosphate. It participates in amino-sugar metabolism; N-acetylneuraminate degradation; D-fructose 6-phosphate from N-acetylneuraminate: step 3/5. Its function is as follows. Converts N-acetylmannosamine-6-phosphate (ManNAc-6-P) to N-acetylglucosamine-6-phosphate (GlcNAc-6-P). The sequence is that of Putative N-acetylmannosamine-6-phosphate 2-epimerase from Synechococcus elongatus (strain ATCC 33912 / PCC 7942 / FACHB-805) (Anacystis nidulans R2).